The sequence spans 346 residues: Biotin synthase (346 aa).

Residues glutamine 38 to threonine 256 enclose the Radical SAM core domain. [4Fe-4S] cluster contacts are provided by cysteine 53, cysteine 57, and cysteine 60. [2Fe-2S] cluster is bound by residues cysteine 97, cysteine 128, cysteine 188, and arginine 260.

Belongs to the radical SAM superfamily. Biotin synthase family. In terms of assembly, homodimer. [4Fe-4S] cluster is required as a cofactor. [2Fe-2S] cluster serves as cofactor.

It catalyses the reaction (4R,5S)-dethiobiotin + (sulfur carrier)-SH + 2 reduced [2Fe-2S]-[ferredoxin] + 2 S-adenosyl-L-methionine = (sulfur carrier)-H + biotin + 2 5'-deoxyadenosine + 2 L-methionine + 2 oxidized [2Fe-2S]-[ferredoxin]. It functions in the pathway cofactor biosynthesis; biotin biosynthesis; biotin from 7,8-diaminononanoate: step 2/2. Catalyzes the conversion of dethiobiotin (DTB) to biotin by the insertion of a sulfur atom into dethiobiotin via a radical-based mechanism. This is Biotin synthase from Salmonella newport (strain SL254).